Here is a 198-residue protein sequence, read N- to C-terminus: Fucoxanthin-chlorophyll a-c binding protein B, chloroplastic (198 aa).

The transit peptide at methionine 1–methionine 31 directs the protein to the chloroplast. The next 3 membrane-spanning stretches (helical) occupy residues isoleucine 73–isoleucine 94, isoleucine 114–methionine 134, and glycine 174–proline 196.

It belongs to the fucoxanthin chlorophyll protein family. In terms of assembly, the LHC complex of chromophytic algae is composed of fucoxanthin, chlorophyll A and C bound non-covalently by fucoxanthin chlorophyll proteins (FCPs). The ratio of the pigments in LHC; fucoxanthin: chlorophyll C: chlorophyll A; (0.6-1): (0.1-0.3): (1).

The protein resides in the plastid. The protein localises to the chloroplast thylakoid membrane. The light-harvesting complex (LHC) functions as a light receptor, it captures and delivers excitation energy to photosystems with which it is closely associated. Energy is transferred from the carotenoid and chlorophyll C (or B) to chlorophyll A and the photosynthetic reaction centers where it is used to synthesize ATP and reducing power. This Phaeodactylum tricornutum (Diatom) protein is Fucoxanthin-chlorophyll a-c binding protein B, chloroplastic (FCPB).